A 333-amino-acid chain; its full sequence is tRNA-modifying protein YgfZ (333 aa).

The folate site is built by tryptophan 33 and tryptophan 195.

This sequence belongs to the tRNA-modifying YgfZ family.

It localises to the cytoplasm. Functionally, folate-binding protein involved in regulating the level of ATP-DnaA and in the modification of some tRNAs. It is probably a key factor in regulatory networks that act via tRNA modification, such as initiation of chromosomal replication. This Pectobacterium carotovorum subsp. carotovorum (strain PC1) protein is tRNA-modifying protein YgfZ.